An 81-amino-acid chain; its full sequence is Cytochrome b559 subunit alpha (81 aa).

The chain crosses the membrane as a helical span at residues 21–35 (VIHSITIPMLFIAGW). Histidine 23 contributes to the heme binding site.

The protein belongs to the PsbE/PsbF family. Heterodimer of an alpha subunit and a beta subunit. PSII is composed of 1 copy each of membrane proteins PsbA, PsbB, PsbC, PsbD, PsbE, PsbF, PsbH, PsbI, PsbJ, PsbK, PsbL, PsbM, PsbT, PsbX, PsbY, PsbZ, Psb30/Ycf12, peripheral proteins PsbO, CyanoQ (PsbQ), PsbU, PsbV and a large number of cofactors. It forms dimeric complexes. Requires heme b as cofactor.

Its subcellular location is the cellular thylakoid membrane. In terms of biological role, this b-type cytochrome is tightly associated with the reaction center of photosystem II (PSII). PSII is a light-driven water:plastoquinone oxidoreductase that uses light energy to abstract electrons from H(2)O, generating O(2) and a proton gradient subsequently used for ATP formation. It consists of a core antenna complex that captures photons, and an electron transfer chain that converts photonic excitation into a charge separation. In Crocosphaera subtropica (strain ATCC 51142 / BH68) (Cyanothece sp. (strain ATCC 51142)), this protein is Cytochrome b559 subunit alpha.